The following is a 1089-amino-acid chain: Protein phosphatase 1 regulatory subunit 3A (1089 aa).

The disordered stretch occupies residues 32-57; sequence KATFKPGFSPQPSRRGSGSSEDMYLD. Residues 37-51 are compositionally biased toward low complexity; the sequence is PGFSPQPSRRGSGSS. Phosphoserine; by GSK3 occurs at positions 40 and 44. Residues S48 and S51 each carry the phosphoserine modification. At T58 the chain carries Phosphothreonine. The short motif at 64-67 is the PP1-binding motif element; sequence RRVS. S67 carries the phosphoserine; by PKA modification. One can recognise a CBM21 domain in the interval 123-231; sequence EQLQVQKAVL…NNNGTNYILV (109 aa). Disordered regions lie at residues 385-420, 479-501, and 566-649; these read FYHSRSSSPGNEYGHPHSEEIISDMGEKGPSLGDTS, HGDSTKLEESNASSRDDYAKVDN, and PCPS…SDIA. The segment covering 581–600 has biased composition (polar residues); it reads SGSNLEPGTSDLSSPRNFSP. The segment covering 602–614 has biased composition (basic and acidic residues); it reads TDDHLFQADRENS. Over residues 615-625 the composition is skewed to polar residues; it reads DSSNPENQNMN. Phosphoserine is present on S821. Residues 949-968 form a disordered region; that stretch reads IMKSGSGGERGGGPILQQKE. The segment covering 953–962 has biased composition (gly residues); sequence GSGGERGGGP. Residues 1047–1067 traverse the membrane as a helical segment; sequence LLFLIFLATVYYYDLMIGLAF.

In terms of assembly, interacts with PPP1CC catalytic subunit of PP1, and associates with glycogen. Phosphorylation at Ser-48 by ISPK stimulates the dephosphorylation of glycogen synthase and phosphorylase kinase. As to expression, skeletal muscle and heart.

It is found in the membrane. Seems to act as a glycogen-targeting subunit for PP1. PP1 is essential for cell division, and participates in the regulation of glycogen metabolism, muscle contractility and protein synthesis. Plays an important role in glycogen synthesis but is not essential for insulin activation of glycogen synthase. The sequence is that of Protein phosphatase 1 regulatory subunit 3A (Ppp1r3a) from Mus musculus (Mouse).